The following is a 62-amino-acid chain: UPF0370 protein plu2724 (62 aa).

A helical membrane pass occupies residues 3 to 23; sequence WLADYWWIILILLVGVLLNAI. Residues 36 to 62 are disordered; sequence DNKPELPPHRDLNSKWDDEDDWPQKKP.

This sequence belongs to the UPF0370 family.

It is found in the cell membrane. This Photorhabdus laumondii subsp. laumondii (strain DSM 15139 / CIP 105565 / TT01) (Photorhabdus luminescens subsp. laumondii) protein is UPF0370 protein plu2724.